We begin with the raw amino-acid sequence, 122 residues long: Large ribosomal subunit protein uL14 (122 aa).

The protein belongs to the universal ribosomal protein uL14 family. Part of the 50S ribosomal subunit. Forms a cluster with proteins L3 and L19. In the 70S ribosome, L14 and L19 interact and together make contacts with the 16S rRNA in bridges B5 and B8.

Functionally, binds to 23S rRNA. Forms part of two intersubunit bridges in the 70S ribosome. The polypeptide is Large ribosomal subunit protein uL14 (Rickettsia typhi (strain ATCC VR-144 / Wilmington)).